We begin with the raw amino-acid sequence, 275 residues long: Small ribosomal subunit protein uS3 (275 aa).

The KH type-2 domain occupies Ile-38 to Lys-106. The disordered stretch occupies residues Ala-215–Ser-275. Low complexity predominate over residues Ser-237–Ser-275.

This sequence belongs to the universal ribosomal protein uS3 family. As to quaternary structure, part of the 30S ribosomal subunit. Forms a tight complex with proteins S10 and S14.

In terms of biological role, binds the lower part of the 30S subunit head. Binds mRNA in the 70S ribosome, positioning it for translation. This chain is Small ribosomal subunit protein uS3, found in Mycolicibacterium smegmatis (strain ATCC 700084 / mc(2)155) (Mycobacterium smegmatis).